The following is a 553-amino-acid chain: Glutamine--tRNA ligase (553 aa).

The 'HIGH' region signature appears at 34–44; the sequence is PEPNGYLHIGH. ATP is bound by residues 35-37 and 41-47; these read EPN and HIGHAKS. Aspartate 68 and tyrosine 213 together coordinate L-glutamine. ATP is bound by residues threonine 232 and 262–263; that span reads RL. A 'KMSKS' region motif is present at residues 269 to 273; that stretch reads LTSKR.

This sequence belongs to the class-I aminoacyl-tRNA synthetase family. Monomer.

It is found in the cytoplasm. The catalysed reaction is tRNA(Gln) + L-glutamine + ATP = L-glutaminyl-tRNA(Gln) + AMP + diphosphate. The polypeptide is Glutamine--tRNA ligase (Psychromonas ingrahamii (strain DSM 17664 / CCUG 51855 / 37)).